A 174-amino-acid chain; its full sequence is Solute carrier family 2, facilitated glucose transporter member 4 (174 aa).

At 1–19 (QQIGSEDGEPPQQRVTGTL) the chain is on the cytoplasmic side. The segment at 2-8 (QIGSEDG) is interaction with SRFBP1. Ser5 is modified (phosphoserine). A helical transmembrane segment spans residues 20–40 (VLAVFSAVLGSLQFGYNIGVI). Over 41–76 (NAPQKVIEQSYNETWLGRQGPNGPGSIPPGTLTTLW) the chain is Extracellular. N-linked (GlcNAc...) asparagine glycosylation occurs at Asn52. Residues 77-97 (ALSVAIFSVGGMFSSFLLGII) form a helical membrane-spanning segment. Topologically, residues 98–114 (SQWLGRKKAMLFNNTLA) are cytoplasmic. A helical membrane pass occupies residues 115-135 (VLAGALMGLAKAAASYEMLIL). The Extracellular segment spans residues 136–137 (GR). The chain crosses the membrane as a helical span at residues 138-158 (FLIGAYSGLASGLVPMYVGEI). At 159 to 166 (APTHLRGA) the chain is on the cytoplasmic side. Residues 167–174 (LGTLNQLA) traverse the membrane as a helical segment.

This sequence belongs to the major facilitator superfamily. Sugar transporter (TC 2.A.1.1) family. Glucose transporter subfamily. In terms of assembly, binds to DAXX. Interacts via its N-terminus with SRFBP1. Interacts with NDUFA9. Interacts with TRARG1; the interaction is required for proper SLC2A4 recycling after insulin stimulation. In terms of processing, sumoylated. Palmitoylated. Palmitoylation by ZDHHC7 controls the insulin-dependent translocation of GLUT4 to the plasma membrane.

The protein localises to the cell membrane. It is found in the endomembrane system. The protein resides in the cytoplasm. Its subcellular location is the perinuclear region. The catalysed reaction is D-glucose(out) = D-glucose(in). Insulin-regulated facilitative glucose transporter, which plays a key role in removal of glucose from circulation. Response to insulin is regulated by its intracellular localization: in the absence of insulin, it is efficiently retained intracellularly within storage compartments in muscle and fat cells. Upon insulin stimulation, translocates from these compartments to the cell surface where it transports glucose from the extracellular milieu into the cell. The polypeptide is Solute carrier family 2, facilitated glucose transporter member 4 (Sus scrofa (Pig)).